The primary structure comprises 614 residues: Phragmoplastin DRP1C (614 aa).

The region spanning 32 to 301 (WEALPTVAVV…LETVIRQKIP (270 aa)) is the Dynamin-type G domain. A G1 motif region spans residues 42–49 (GGQSSGKS). 45-50 (SSGKSS) contributes to the GTP binding site. Residues 68-70 (VTR) are G2 motif. Positions 143-146 (DLPG) are G3 motif. Residues 212 to 215 (TKLD) are G4 motif. Residues 213 to 218 (KLDIMD) and 243 to 246 (NRSQ) contribute to the GTP site. The tract at residues 242 to 245 (VNRS) is G5 motif. A disordered region spans residues 499-519 (EPEKEKPNPRNAPAPNADPYS). Over residues 507–517 (PRNAPAPNADP) the composition is skewed to low complexity. The GED domain maps to 523-614 (FRKIGSNVSA…RDDIDAVAWK (92 aa)).

Belongs to the TRAFAC class dynamin-like GTPase superfamily. Dynamin/Fzo/YdjA family. Forms homodimer and may homooligomerize and heterooligomerize to form the phragmoplastin complex. Binds to PHIP1. Ubiquitous.

It localises to the cytoplasm. Its subcellular location is the cytoskeleton. The protein localises to the cell cortex. It is found in the cytoplasmic vesicle. The protein resides in the clathrin-coated vesicle. It localises to the phragmoplast. It catalyses the reaction GTP + H2O = GDP + phosphate + H(+). In terms of biological role, microtubule-associated force-producing protein that is targeted to the growing edges of the cell plate during cytokinesis. Also plays a major role in plasma membrane maintenance during pollen maturation. Has a GTPase activity. The protein is Phragmoplastin DRP1C of Arabidopsis thaliana (Mouse-ear cress).